The sequence spans 488 residues: Dipeptide and tripeptide permease B (488 aa).

The Cytoplasmic portion of the chain corresponds to 1-27 (MSKTASVGLWDQPKPFFMIFFVELWER). The chain crosses the membrane as a helical span at residues 28-48 (FGFYGVQGILAIYFVQQLGFS). Topologically, residues 49-52 (EEQS) are periplasmic. Residues 53 to 73 (FITFGAFTALVYGLISVGGYV) traverse the membrane as a helical segment. The Cytoplasmic portion of the chain corresponds to 74 to 82 (GDHILGTKR). The helical transmembrane segment at 83 to 103 (TIVLGAIVMAIGYYMIGLSIM) threads the bilayer. Residues 104-106 (KPE) are Periplasmic-facing. Residues 107–127 (LIFYALGTVAVGNGLFKANPA) form a helical membrane-spanning segment. Residues 128 to 146 (SLLAKCYQPQDPRLDGAFT) lie on the Cytoplasmic side of the membrane. The helical transmembrane segment at 147–167 (LFYMSINLGSLFSLSLAPVIA) threads the bilayer. Over 168–172 (EKYGY) the chain is Periplasmic. Residues 173–193 (TVTYNICGIGLIIALLVYIAC) traverse the membrane as a helical segment. Residues 194-211 (RRMVHNIGSAPDHHPVKP) lie on the Cytoplasmic side of the membrane. Residues 212–232 (IGLIAVLIGSVVMVGVCAWLL) form a helical membrane-spanning segment. The Periplasmic portion of the chain corresponds to 233-234 (HN). Residues 235-255 (IKVANIALFAITTIVVLIFFW) form a helical membrane-spanning segment. Residues 256–267 (QAFKQNRVGRNK) lie on the Cytoplasmic side of the membrane. The chain crosses the membrane as a helical span at residues 268–288 (MFVAFILMLQAVVFFILYNQM). The Periplasmic segment spans residues 289-311 (PMSLNFFAINNVHHQILGFDVNP). The chain crosses the membrane as a helical span at residues 312–332 (VSFQAFNPFWIIIVSPILAVV). The Cytoplasmic segment spans residues 333–348 (YTKLGAKGKDFSMPAK). The chain crosses the membrane as a helical span at residues 349–369 (FTFGMFLCSLGFLTAAASGLF). The Periplasmic segment spans residues 370–378 (ADAQGITSP). A helical membrane pass occupies residues 379–399 (WFIVLVYLFQSVGELMISALG). The Cytoplasmic portion of the chain corresponds to 400-423 (LAMVAAFVPSYLTGFILGMWFLSQ). A helical transmembrane segment spans residues 424–444 (AVASMLASHVAALTATPVGVT). Topologically, residues 445–455 (DPLQTLPIYMS) are periplasmic. A helical membrane pass occupies residues 456–476 (VFGKIGVATLIVAIIMTFMVP). The Cytoplasmic segment spans residues 477-488 (WLNRIMREEVKA).

The protein belongs to the major facilitator superfamily. Proton-dependent oligopeptide transporter (POT/PTR) (TC 2.A.17) family. DtpB subfamily.

The protein resides in the cell inner membrane. Functionally, proton-dependent permease that transports di- and tripeptides. This Xenorhabdus bovienii (strain SS-2004) (Xenorhabdus nematophila subsp. bovienii) protein is Dipeptide and tripeptide permease B.